The following is a 344-amino-acid chain: MALLKTMPIIRSLTRGKSIRLLQKQSTKRTNPCVYLEAKAVEQTPATEFNSILQEIISTEYNYSVDLKKTLNEIIMPIEGQSMEREAIGICTCFKTLNQLHTKLYQQMISSGSPVYSLSQSLPAFRDVYHMYTINLSGISAIEKIISDPSSCNSQLLIPLQHLLRYPIHLARVCKMLRKYPFLNGDFRMAVKTLDDFRELCSYIDQEKAREESYQVLSALCGNQGVAVDIPRHIKFKGSVIPATSFIYDFNACVFCDDGLVVWTRYVKKIEMKAVSIEQCLRVDELSNSILVCTLNMKGKLLNRHLAPQTMAASVFLKWYHERAGISNGKENKLNRLKVVNAKT.

In terms of domain architecture, DH spans 48 to 207; sequence EFNSILQEII…RELCSYIDQE (160 aa).

The protein localises to the cytoplasm. It is found in the nucleus. Functionally, has a role in meiosis. The sequence is that of Meiotically up-regulated gene 10 protein (mug10) from Schizosaccharomyces pombe (strain 972 / ATCC 24843) (Fission yeast).